The primary structure comprises 205 residues: dITP/XTP pyrophosphatase (205 aa).

10 to 15 lines the substrate pocket; sequence TKNEGK. 2 residues coordinate Mg(2+): Glu-44 and Asp-73. The active-site Proton acceptor is the Asp-73. Substrate is bound by residues Ser-74, 156-159, Lys-179, and 184-185; these read FGYD and HR.

Belongs to the HAM1 NTPase family. Homodimer. Mg(2+) serves as cofactor.

The catalysed reaction is XTP + H2O = XMP + diphosphate + H(+). It catalyses the reaction dITP + H2O = dIMP + diphosphate + H(+). It carries out the reaction ITP + H2O = IMP + diphosphate + H(+). Functionally, pyrophosphatase that catalyzes the hydrolysis of nucleoside triphosphates to their monophosphate derivatives, with a high preference for the non-canonical purine nucleotides XTP (xanthosine triphosphate), dITP (deoxyinosine triphosphate) and ITP. Seems to function as a house-cleaning enzyme that removes non-canonical purine nucleotides from the nucleotide pool, thus preventing their incorporation into DNA/RNA and avoiding chromosomal lesions. This chain is dITP/XTP pyrophosphatase, found in Dictyoglomus thermophilum (strain ATCC 35947 / DSM 3960 / H-6-12).